We begin with the raw amino-acid sequence, 325 residues long: Lipoyl synthase (325 aa).

Positions 1-33 (MATVIDTLKARGSEDRAARHPEKQNRPDTPVLR) are disordered. Residues 8-33 (LKARGSEDRAARHPEKQNRPDTPVLR) are compositionally biased toward basic and acidic residues. C64, C69, C75, C90, C94, C97, and S303 together coordinate [4Fe-4S] cluster. Positions 76-292 (WSQKHATMMI…EAIARAKGFL (217 aa)) constitute a Radical SAM core domain.

The protein belongs to the radical SAM superfamily. Lipoyl synthase family. [4Fe-4S] cluster is required as a cofactor.

It localises to the cytoplasm. The enzyme catalyses [[Fe-S] cluster scaffold protein carrying a second [4Fe-4S](2+) cluster] + N(6)-octanoyl-L-lysyl-[protein] + 2 oxidized [2Fe-2S]-[ferredoxin] + 2 S-adenosyl-L-methionine + 4 H(+) = [[Fe-S] cluster scaffold protein] + N(6)-[(R)-dihydrolipoyl]-L-lysyl-[protein] + 4 Fe(3+) + 2 hydrogen sulfide + 2 5'-deoxyadenosine + 2 L-methionine + 2 reduced [2Fe-2S]-[ferredoxin]. Its pathway is protein modification; protein lipoylation via endogenous pathway; protein N(6)-(lipoyl)lysine from octanoyl-[acyl-carrier-protein]: step 2/2. Its function is as follows. Catalyzes the radical-mediated insertion of two sulfur atoms into the C-6 and C-8 positions of the octanoyl moiety bound to the lipoyl domains of lipoate-dependent enzymes, thereby converting the octanoylated domains into lipoylated derivatives. The protein is Lipoyl synthase of Caulobacter vibrioides (strain ATCC 19089 / CIP 103742 / CB 15) (Caulobacter crescentus).